The sequence spans 120 residues: MQTPPELKYAPSHEWLAPDGTVGISDFAQDQLGDVVYVELPEVGRVVTAGETVAVVESVKTASDIYAPASGTIVAVNEQLSGSPELVNQSPYTDGWLFRLDVTEESGELMDAEAYAAANG.

In terms of domain architecture, Lipoyl-binding spans 19-101 (DGTVGISDFA…YTDGWLFRLD (83 aa)). An N6-lipoyllysine modification is found at lysine 60.

Belongs to the GcvH family. In terms of assembly, the glycine cleavage system is composed of four proteins: P, T, L and H. Requires (R)-lipoate as cofactor.

Its function is as follows. The glycine cleavage system catalyzes the degradation of glycine. The H protein shuttles the methylamine group of glycine from the P protein to the T protein. The polypeptide is Glycine cleavage system H protein (Deinococcus geothermalis (strain DSM 11300 / CIP 105573 / AG-3a)).